Reading from the N-terminus, the 273-residue chain is SKA complex subunit 1 homolog (273 aa).

Residues 77-97 (KKLVQRSLKEEEKLQHMLANL) are a coiled coil.

This sequence belongs to the SKA1 family.

In Zea mays (Maize), this protein is SKA complex subunit 1 homolog.